A 392-amino-acid chain; its full sequence is DNA primase small subunit PriS (392 aa).

Residues D98, D100, and D295 contribute to the active site.

Belongs to the eukaryotic-type primase small subunit family. As to quaternary structure, heterodimer of a small subunit (PriS) and a large subunit (PriL). Mg(2+) is required as a cofactor. It depends on Mn(2+) as a cofactor.

Functionally, catalytic subunit of DNA primase, an RNA polymerase that catalyzes the synthesis of short RNA molecules used as primers for DNA polymerase during DNA replication. The small subunit contains the primase catalytic core and has DNA synthesis activity on its own. Binding to the large subunit stabilizes and modulates the activity, increasing the rate of DNA synthesis while decreasing the length of the DNA fragments, and conferring RNA synthesis capability. The DNA polymerase activity may enable DNA primase to also catalyze primer extension after primer synthesis. May also play a role in DNA repair. In Haloarcula marismortui (strain ATCC 43049 / DSM 3752 / JCM 8966 / VKM B-1809) (Halobacterium marismortui), this protein is DNA primase small subunit PriS.